The following is a 427-amino-acid chain: Glutamate-1-semialdehyde 2,1-aminomutase (427 aa).

The residue at position 267 (lysine 267) is an N6-(pyridoxal phosphate)lysine.

The protein belongs to the class-III pyridoxal-phosphate-dependent aminotransferase family. HemL subfamily. Homodimer. It depends on pyridoxal 5'-phosphate as a cofactor.

The protein resides in the cytoplasm. It carries out the reaction (S)-4-amino-5-oxopentanoate = 5-aminolevulinate. It participates in porphyrin-containing compound metabolism; protoporphyrin-IX biosynthesis; 5-aminolevulinate from L-glutamyl-tRNA(Glu): step 2/2. The polypeptide is Glutamate-1-semialdehyde 2,1-aminomutase (Citrifermentans bemidjiense (strain ATCC BAA-1014 / DSM 16622 / JCM 12645 / Bem) (Geobacter bemidjiensis)).